Here is a 49-residue protein sequence, read N- to C-terminus: Unknown protein from spot 75 of 2D-PAGE of etiolated coleoptile (49 aa).

The protein is Unknown protein from spot 75 of 2D-PAGE of etiolated coleoptile of Zea mays (Maize).